The chain runs to 393 residues: Zinc-regulated GTPase metalloprotein activator 1 (393 aa).

The psi-PxLVp motif signature appears at 16–23 (EDCPELVP). 47–54 (GYLGAGKT) is a binding site for GTP. Zn(2+) is bound by residues Cys105, Cys107, and Cys108. Positions 105-108 (CLCC) match the CXCC motif motif. GTP is bound by residues 108–112 (CSVKD) and 201–204 (NKTD). The 104-residue stretch at 271 to 374 (IVTVTFEVPG…VLQQLFLTAV (104 aa)) folds into the CobW C-terminal domain.

This sequence belongs to the SIMIBI class G3E GTPase family. ZNG1 subfamily. As to expression, present at high level in the nuclei of the ureteric bud cells in the developing kidneys.

The protein resides in the nucleus. The enzyme catalyses GTP + H2O = GDP + phosphate + H(+). Functionally, zinc chaperone that directly transfers zinc cofactor to target metalloproteins, thereby activating them. Catalyzes zinc insertion into the active site of methionine aminopeptidase METAP1, which function to cleave the initiator methionine from polypeptides during or after protein translation. Mechanistically, the N-terminal psi-PxLVp motif binds to the C6H2-type zinc finger of inactive form of METAP1. After formation of the docked complex, zinc is transferred from the CXCC motif in the GTPase domain of ZNG1 to the zinc binding site in the peptidase domain of METAP1 in a process requiring GTP hydrolysis. GTP/GDP exchange is required for release of active METAP1. This Mus musculus (Mouse) protein is Zinc-regulated GTPase metalloprotein activator 1 (Zng1).